A 333-amino-acid chain; its full sequence is Glycerol-3-phosphate dehydrogenase [NAD(P)+] (333 aa).

The NADPH site is built by Ser10, Trp11, His31, Arg32, and Lys105. Residues Lys105, Gly136, and Ser138 each coordinate sn-glycerol 3-phosphate. An NADPH-binding site is contributed by Ala140. Sn-glycerol 3-phosphate-binding residues include Lys191, Asp244, Ser254, Arg255, and Asn256. The active-site Proton acceptor is Lys191. NADPH is bound at residue Arg255. Residues Val279 and Glu281 each coordinate NADPH.

This sequence belongs to the NAD-dependent glycerol-3-phosphate dehydrogenase family.

It is found in the cytoplasm. It carries out the reaction sn-glycerol 3-phosphate + NAD(+) = dihydroxyacetone phosphate + NADH + H(+). The enzyme catalyses sn-glycerol 3-phosphate + NADP(+) = dihydroxyacetone phosphate + NADPH + H(+). It functions in the pathway membrane lipid metabolism; glycerophospholipid metabolism. Its function is as follows. Catalyzes the reduction of the glycolytic intermediate dihydroxyacetone phosphate (DHAP) to sn-glycerol 3-phosphate (G3P), the key precursor for phospholipid synthesis. The chain is Glycerol-3-phosphate dehydrogenase [NAD(P)+] from Chlorobium phaeobacteroides (strain DSM 266 / SMG 266 / 2430).